Here is a 632-residue protein sequence, read N- to C-terminus: Extracellular metalloproteinase 2 (632 aa).

The signal sequence occupies residues 1 to 19 (MHGLLLAGLAVALPLGVAG). Positions 20-244 (HPARPQTALS…VHNVVDYVAS (225 aa)) are excised as a propeptide. Asn-270 is a glycosylation site (N-linked (GlcNAc...) asparagine). The span at 294–310 (NNVAAQDNPSGGSQWEN) shows a compositional bias: polar residues. Positions 294-313 (NNVAAQDNPSGGSQWENNYR) are disordered. His-429 serves as a coordination point for Zn(2+). Residue Glu-430 is part of the active site. His-433 contacts Zn(2+).

The protein belongs to the peptidase M36 family. It depends on Zn(2+) as a cofactor.

The protein resides in the secreted. Its function is as follows. Secreted metalloproteinase probably acting as a virulence factor. This Arthroderma otae (Microsporum canis) protein is Extracellular metalloproteinase 2 (MEP2).